A 507-amino-acid chain; its full sequence is Extracellular elastase (507 aa).

The N-terminal stretch at 1–28 (MKNFSKFALTSIAALTVASPLVNTEVDA) is a signal peptide. Positions 29–207 (KDKVSATQNI…VVDKLNMIKE (179 aa)) are excised as a propeptide. Position 347 (Asp347) interacts with Ca(2+). His351 serves as a coordination point for Zn(2+). Glu352 is a catalytic residue. Residues His355 and Glu375 each contribute to the Zn(2+) site. Positions 386, 388, 389, 391, 394, 397, 398, 401, and 404 each coordinate Ca(2+). The active-site Proton donor is His435.

It belongs to the peptidase M4 family. The cofactor is Ca(2+). It depends on Zn(2+) as a cofactor.

It localises to the secreted. Functionally, protease that has a low substrate specificity. Glucagon is preferentially cleaved between aromatic (Phe) and hydrophobic (Val) amino acids. Hydrolyzes casein and elastin. This is Extracellular elastase (sepA) from Staphylococcus epidermidis.